The following is a 77-amino-acid chain: MARVCQVTGKAPMVGNNVSHANNKTKRRFLPNLQNRRFWVESENRWVSLRVSNAGLRLIDKKGIDEVLVDLRARGEV.

The protein belongs to the bacterial ribosomal protein bL28 family.

This Ralstonia pickettii (strain 12J) protein is Large ribosomal subunit protein bL28.